The primary structure comprises 318 residues: Acetyl-coenzyme A carboxylase carboxyl transferase subunit alpha (318 aa).

Residues 41–295 (HLEKKNEELT…KQRILTDLNE (255 aa)) enclose the CoA carboxyltransferase C-terminal domain.

The protein belongs to the AccA family. Acetyl-CoA carboxylase is a heterohexamer composed of biotin carboxyl carrier protein (AccB), biotin carboxylase (AccC) and two subunits each of ACCase subunit alpha (AccA) and ACCase subunit beta (AccD).

The protein resides in the cytoplasm. It catalyses the reaction N(6)-carboxybiotinyl-L-lysyl-[protein] + acetyl-CoA = N(6)-biotinyl-L-lysyl-[protein] + malonyl-CoA. It participates in lipid metabolism; malonyl-CoA biosynthesis; malonyl-CoA from acetyl-CoA: step 1/1. Its function is as follows. Component of the acetyl coenzyme A carboxylase (ACC) complex. First, biotin carboxylase catalyzes the carboxylation of biotin on its carrier protein (BCCP) and then the CO(2) group is transferred by the carboxyltransferase to acetyl-CoA to form malonyl-CoA. The sequence is that of Acetyl-coenzyme A carboxylase carboxyl transferase subunit alpha from Tolumonas auensis (strain DSM 9187 / NBRC 110442 / TA 4).